A 416-amino-acid chain; its full sequence is Homogentisate 1,2-dioxygenase (416 aa).

The active-site Proton acceptor is His275. His318 and Glu324 together coordinate Fe cation. Tyr333 and His354 together coordinate homogentisate. Fe cation is bound at residue His354.

It belongs to the homogentisate dioxygenase family. In terms of assembly, hexamer; dimer of trimers. Requires Fe cation as cofactor.

The enzyme catalyses homogentisate + O2 = 4-maleylacetoacetate + H(+). Its pathway is amino-acid degradation; L-phenylalanine degradation; acetoacetate and fumarate from L-phenylalanine: step 4/6. In terms of biological role, involved in the catabolism of homogentisate (2,5-dihydroxyphenylacetate or 2,5-OH-PhAc), a central intermediate in the degradation of phenylalanine and tyrosine. Catalyzes the oxidative ring cleavage of the aromatic ring of homogentisate to yield maleylacetoacetate. This chain is Homogentisate 1,2-dioxygenase, found in Legionella pneumophila (strain Lens).